The following is a 310-amino-acid chain: Thioredoxin reductase (310 aa).

34–41 contacts FAD; the sequence is NGMQPGGQ. Cysteines 135 and 138 form a disulfide. Position 281 to 290 (281 to 290) interacts with FAD; sequence DVQDKIYRQA.

This sequence belongs to the class-II pyridine nucleotide-disulfide oxidoreductase family. In terms of assembly, homodimer. The cofactor is FAD.

Its subcellular location is the cytoplasm. The catalysed reaction is [thioredoxin]-dithiol + NADP(+) = [thioredoxin]-disulfide + NADPH + H(+). The sequence is that of Thioredoxin reductase (trxB) from Rickettsia prowazekii (strain Madrid E).